Consider the following 317-residue polypeptide: WSCD family member CG9164 (317 aa).

A helical transmembrane segment spans residues 8-28; that stretch reads FFGVSATIIIYIGGVLFLSMN. 3 N-linked (GlcNAc...) asparagine glycosylation sites follow: Asn-151, Asn-227, and Asn-233.

It belongs to the WSCD family.

It is found in the membrane. In Drosophila melanogaster (Fruit fly), this protein is WSCD family member CG9164.